The primary structure comprises 404 residues: Cysteine desulfurase IscS (404 aa).

Pyridoxal 5'-phosphate contacts are provided by residues 75 to 76 (AT), N155, Q183, and 203 to 205 (SGH). An N6-(pyridoxal phosphate)lysine modification is found at K206. Residue T243 coordinates pyridoxal 5'-phosphate. Residue C328 is the Cysteine persulfide intermediate of the active site. C328 contributes to the [2Fe-2S] cluster binding site.

It belongs to the class-V pyridoxal-phosphate-dependent aminotransferase family. NifS/IscS subfamily. In terms of assembly, homodimer. Forms a heterotetramer with IscU, interacts with other sulfur acceptors. Requires pyridoxal 5'-phosphate as cofactor.

It is found in the cytoplasm. It catalyses the reaction (sulfur carrier)-H + L-cysteine = (sulfur carrier)-SH + L-alanine. Its pathway is cofactor biosynthesis; iron-sulfur cluster biosynthesis. Master enzyme that delivers sulfur to a number of partners involved in Fe-S cluster assembly, tRNA modification or cofactor biosynthesis. Catalyzes the removal of elemental sulfur atoms from cysteine to produce alanine. Functions as a sulfur delivery protein for Fe-S cluster synthesis onto IscU, an Fe-S scaffold assembly protein, as well as other S acceptor proteins. The polypeptide is Cysteine desulfurase IscS (Shewanella amazonensis (strain ATCC BAA-1098 / SB2B)).